The primary structure comprises 334 residues: MNALPIRTAAPSGHSGGHSSTGTHVPVLLNEVLETLSPAPGGVFLDGTFGGGGYTRAILDTAEDSTVWAVDRDPAAITRGEALAARYRGRLHLIQGNFSQMASLLTDRGVNALDGIVLDIGVSSFQIDDPDRGFSFRTDGPLDMRMAGEGTSAADLIARLPEAEIANILYELGEERKSRQIARAIVSARAEEPITTTGRLASIIRCVVPPDRSGIDPATRSFQALRIAVNDELGELERALQQATNLLQPGGRLVIVSFHSLEDRIVKRFMNDAAGNAPSPSRYDPRGLVARTEPRFRLITSKAVRPGTAEQNANPRSRSARLRAIECLRRETTP.

The segment at 1–21 is disordered; it reads MNALPIRTAAPSGHSGGHSST. S-adenosyl-L-methionine-binding positions include 52 to 54, Asp71, Phe98, Asp119, and Gln126; that span reads GGY.

The protein belongs to the methyltransferase superfamily. RsmH family.

It localises to the cytoplasm. It catalyses the reaction cytidine(1402) in 16S rRNA + S-adenosyl-L-methionine = N(4)-methylcytidine(1402) in 16S rRNA + S-adenosyl-L-homocysteine + H(+). In terms of biological role, specifically methylates the N4 position of cytidine in position 1402 (C1402) of 16S rRNA. The polypeptide is Ribosomal RNA small subunit methyltransferase H (Granulibacter bethesdensis (strain ATCC BAA-1260 / CGDNIH1)).